Reading from the N-terminus, the 384-residue chain is MSEQLVTPENVTTKDGKINLLDLNRQQMREFFKDLGEKPFRADQVMKWMYHYCCDNFDEMTDINKVLRGKLKEVAEIRAPEVVEEQRSSDGTIKWAIAVGDQRVETVYIPEDDRATLCVSSQVGCALECKFCSTAQQGFNRNLRVSEIIGQVWRAAKIVGAAKVTGQRPITNVVMMGMGEPLLNLNNVVPAMEIMLDDFGFGLSKRRVTLSTSGVVPALDKLGDMIDVALAISLHAPNDEIRDEIVPINKKYNIETFLAAVRRYLEKSNANQGRVTIEYVMLDHVNDGTEHAHQLAELLKDTPCKINLIPWNPFPGAPYGRSSNSRIDRFSKVLMSYGFTTIVRKTRGDDIDAACGQLAGDVIDRTKRTLRKRMQGEAIDVRSV.

The active-site Proton acceptor is the Glu105. Positions 111 to 350 (EDDRATLCVS…TIVRKTRGDD (240 aa)) constitute a Radical SAM core domain. Cys118 and Cys355 are oxidised to a cystine. Residues Cys125, Cys129, and Cys132 each coordinate [4Fe-4S] cluster. S-adenosyl-L-methionine is bound by residues 179–180 (GE), Ser211, 233–235 (SLH), and Asn312. Catalysis depends on Cys355, which acts as the S-methylcysteine intermediate.

The protein belongs to the radical SAM superfamily. RlmN family. It depends on [4Fe-4S] cluster as a cofactor.

It localises to the cytoplasm. The enzyme catalyses adenosine(2503) in 23S rRNA + 2 reduced [2Fe-2S]-[ferredoxin] + 2 S-adenosyl-L-methionine = 2-methyladenosine(2503) in 23S rRNA + 5'-deoxyadenosine + L-methionine + 2 oxidized [2Fe-2S]-[ferredoxin] + S-adenosyl-L-homocysteine. It carries out the reaction adenosine(37) in tRNA + 2 reduced [2Fe-2S]-[ferredoxin] + 2 S-adenosyl-L-methionine = 2-methyladenosine(37) in tRNA + 5'-deoxyadenosine + L-methionine + 2 oxidized [2Fe-2S]-[ferredoxin] + S-adenosyl-L-homocysteine. Its function is as follows. Specifically methylates position 2 of adenine 2503 in 23S rRNA and position 2 of adenine 37 in tRNAs. m2A2503 modification seems to play a crucial role in the proofreading step occurring at the peptidyl transferase center and thus would serve to optimize ribosomal fidelity. The sequence is that of Dual-specificity RNA methyltransferase RlmN from Escherichia fergusonii (strain ATCC 35469 / DSM 13698 / CCUG 18766 / IAM 14443 / JCM 21226 / LMG 7866 / NBRC 102419 / NCTC 12128 / CDC 0568-73).